The primary structure comprises 370 residues: 3,5-dihydroxyphenylacetyl-CoA synthase (370 aa).

Cys158 is an active-site residue.

It belongs to the thiolase-like superfamily. Chalcone/stilbene synthases family.

The enzyme catalyses 4 malonyl-CoA + 4 H(+) = (3,5-dihydroxyphenyl)acetyl-CoA + 4 CO2 + 3 CoA + H2O. It functions in the pathway antibiotic biosynthesis; vancomycin biosynthesis. In terms of biological role, involved in the biosynthesis of the nonproteinogenic amino acid monomer (S)-3,5-dihydroxyphenylglycine (Dpg) responsible of the production of vancomycin and teicoplanin antibiotics. Catalyzes the Claisen condensation of four molecules of malonyl-CoA to yield 3,5-dihydroxyphenylacetyl-CoA (DPA-CoA) and three free coenzyme A (CoA). DpgA requires the presence of the dehydratases DpgB and DpgD to facilitate the aromatization of the DPA-S-DgpA or DPA-S-CoA intermediate. This Amycolatopsis orientalis (Nocardia orientalis) protein is 3,5-dihydroxyphenylacetyl-CoA synthase (dpgA).